Here is a 943-residue protein sequence, read N- to C-terminus: Leucine--tRNA ligase (943 aa).

The 'HIGH' region signature appears at 40-51 (PYPSGAGLHVGH). The short motif at 717–721 (KMSKS) is the 'KMSKS' region element. Lys-720 lines the ATP pocket.

Belongs to the class-I aminoacyl-tRNA synthetase family.

The protein localises to the cytoplasm. It catalyses the reaction tRNA(Leu) + L-leucine + ATP = L-leucyl-tRNA(Leu) + AMP + diphosphate. The sequence is that of Leucine--tRNA ligase from Bacteroides fragilis (strain ATCC 25285 / DSM 2151 / CCUG 4856 / JCM 11019 / LMG 10263 / NCTC 9343 / Onslow / VPI 2553 / EN-2).